Reading from the N-terminus, the 238-residue chain is Ribonuclease PH (238 aa).

Residues arginine 86 and 124 to 126 contribute to the phosphate site; that span reads GTR.

The protein belongs to the RNase PH family. Homohexameric ring arranged as a trimer of dimers.

It carries out the reaction tRNA(n+1) + phosphate = tRNA(n) + a ribonucleoside 5'-diphosphate. Its function is as follows. Phosphorolytic 3'-5' exoribonuclease that plays an important role in tRNA 3'-end maturation. Removes nucleotide residues following the 3'-CCA terminus of tRNAs; can also add nucleotides to the ends of RNA molecules by using nucleoside diphosphates as substrates, but this may not be physiologically important. Probably plays a role in initiation of 16S rRNA degradation (leading to ribosome degradation) during starvation. This Brucella melitensis biotype 2 (strain ATCC 23457) protein is Ribonuclease PH.